Here is a 1080-residue protein sequence, read N- to C-terminus: Serine/threonine-protein kinase KIC1 (1080 aa).

In terms of domain architecture, Protein kinase spans 23–276 (FKRTEVIGRG…ADDLLKSKFI (254 aa)). ATP-binding positions include 29-37 (IGRGKFGVV) and Lys52. Asp144 (proton acceptor) is an active-site residue. 4 disordered regions span residues 308–347 (EGSI…EIKR), 615–760 (KARS…LAPP), 787–831 (STLN…LQMP), and 901–956 (SQSI…NTGN). Residues 312–326 (PENEPSKPSEAPKPS) show a composition bias toward low complexity. The span at 615–626 (KARSSTVTAGTP) shows a compositional bias: polar residues. The segment covering 627–638 (SSSSSIQYKSPS) has biased composition (low complexity). Polar residues predominate over residues 656–673 (STITNQKLGSAVASNSGI). The span at 674–689 (SSTPNNSNNYNNNTDS) shows a compositional bias: low complexity. Positions 693 to 726 (RGSSGSNTANSTQMGITNPGNVTKLSTHKASSPS) are enriched in polar residues. A Phosphoserine modification is found at Ser735. Polar residues predominate over residues 743–756 (SPTQNIGHNSTHTN). Low complexity predominate over residues 787–807 (STLNTISGNSSNNLTSSNYFS). Basic and acidic residues predominate over residues 808 to 821 (NEKEGSRVNGDFKR). Residues 901–913 (SQSISNRKNSSAS) show a composition bias toward polar residues. The span at 918–956 (NILGSSVSGNVSGIGNNNVGSNNNSGPNNSVPLSANTGN) shows a compositional bias: low complexity.

It belongs to the protein kinase superfamily. Ser/Thr protein kinase family. In terms of assembly, interacts with CDC31.

It carries out the reaction L-seryl-[protein] + ATP = O-phospho-L-seryl-[protein] + ADP + H(+). The catalysed reaction is L-threonyl-[protein] + ATP = O-phospho-L-threonyl-[protein] + ADP + H(+). Functionally, protein kinase involved in morphogenesis and cell integrity. The chain is Serine/threonine-protein kinase KIC1 (KIC1) from Saccharomyces cerevisiae (strain ATCC 204508 / S288c) (Baker's yeast).